The following is a 511-amino-acid chain: Histidine ammonia-lyase (511 aa).

The segment at residues 142 to 144 (ASG) is a cross-link (5-imidazolinone (Ala-Gly)). 2,3-didehydroalanine (Ser) is present on Ser143.

Belongs to the PAL/histidase family. In terms of processing, contains an active site 4-methylidene-imidazol-5-one (MIO), which is formed autocatalytically by cyclization and dehydration of residues Ala-Ser-Gly.

It is found in the cytoplasm. It catalyses the reaction L-histidine = trans-urocanate + NH4(+). It participates in amino-acid degradation; L-histidine degradation into L-glutamate; N-formimidoyl-L-glutamate from L-histidine: step 1/3. The protein is Histidine ammonia-lyase of Brucella canis (strain ATCC 23365 / NCTC 10854 / RM-666).